A 403-amino-acid polypeptide reads, in one-letter code: MALRLTRNSQLAAENRTSLAGKGMAAKPALRPRAVLGEIGNKTAAPRPLLKKETKPEITKVVQRKPIKVEKAPEVQLPKRNAAKKLEEKVTLPVVPEPASPTPMETSGCASDDLCQAFSDVLLNIKDVDADDYDNPMLCSEYIKDIYKYLRQLEVDQAVRPKYLEGQEVTGNMRAILIDWLVQVQVKFRLLQETMYMTVGIIDRFLQDNPVPKKQLQLVGVTAMFLASKYEEMYPPEIADFAFVTDRAYTTAQIRDMEMKILRVLNFSFGRPLPLQFLRRASKIGEVTAEHHTLAKYFMELTMVDYEMVHFPPSLVASAAFALSLKVFDCGEWTPTLQYYMDYTEACLIPVMQHIAKNVVKVNEGHTKHMAVKNKYGSQKQMRISHLPQLKSSVIKDLAKQLS.

The protein belongs to the cyclin family. Cyclin AB subfamily. Interacts with the CDC2 protein kinase to form a serine/threonine kinase holoenzyme complex also known as maturation promoting factor (MPF). The cyclin subunit imparts substrate specificity to the complex.

In terms of biological role, essential for the control of the cell cycle at the G2/M (mitosis) transition. This is G2/mitotic-specific cyclin-B1 (ccnb1) from Anguilla japonica (Japanese eel).